Here is a 504-residue protein sequence, read N- to C-terminus: Protein Dok-7 (504 aa).

The region spanning 4-109 (AALVEGQVKL…WDTRIRYALG (106 aa)) is the PH domain. The region spanning 105–210 (RYALGEVHRF…RGISPTKGPF (106 aa)) is the IRS-type PTB domain. 3 disordered regions span residues 210 to 232 (FGLR…ERVA), 248 to 348 (LSHS…HSSY), and 371 to 483 (SLLS…PHAG). A compositionally biased stretch (low complexity) spans 263 to 280 (LSSSSSEASHSDISASSR). Polar residues-rich tracts occupy residues 285–297 (PEQS…TSQE), 331–341 (GRQSSSDSGIA), and 421–430 (PASQGSSDHG).

As to quaternary structure, homodimer. Forms a heterotetramer composed of 2 DOK7 and 2 MUSK molecules which facilitates MUSK trans-autophosphorylation on tyrosine residue and activation. Interacts (via IRS-type PTB domain) with MUSK (via cytoplasmic part); requires MUSK phosphorylation.

Its subcellular location is the cell membrane. It is found in the synapse. In terms of biological role, probable muscle-intrinsic activator of MUSK that plays an essential role in neuromuscular synaptogenesis. Acts in aneural activation of MUSK and subsequent acetylcholine receptor (AchR) clustering in myotubes. Induces autophosphorylation of MUSK. This is Protein Dok-7 (Dok7) from Mus musculus (Mouse).